The sequence spans 28 residues: Probable small spore coat assembly protein B (28 aa).

The helical transmembrane segment at 4–24 (VFAGGFALLVVLFILLIIIGA) threads the bilayer.

It belongs to the SscA family.

The protein resides in the membrane. This is Probable small spore coat assembly protein B from Bacillus subtilis (strain 168).